The sequence spans 257 residues: MVLIRVLANLLILQLSYAQKSSELVIGGDECNINEHPFLVLVYYDDYQCGGTLLNEEWVLTAAHCNGKDMEIYLGVHSKKVPNKDVQRRVPKEKFFCDSSKTYTKWNKDIMLIRLDRPVRKSAHIAPLSLPSSPPSVGSVCRVMGWGTITSPQETYPDVPHCANINLLDYEVCRAAYAGLPATSRTLCAGILEGGKDSCVGDSGGPLICNGQFQGIVSWGGDPCAQPREPGVCTNVFDHLDWIKGIIAGNTDVTCPL.

A signal peptide spans 1 to 18; sequence MVLIRVLANLLILQLSYA. Positions 19–24 are excised as a propeptide; that stretch reads QKSSEL. One can recognise a Peptidase S1 domain in the interval 25 to 248; the sequence is VIGGDECNIN…HLDWIKGIIA (224 aa). Cystine bridges form between C31-C162, C49-C65, C97-C255, C141-C209, C173-C188, and C199-C224. Catalysis depends on charge relay system residues H64 and D109. Catalysis depends on S203, which acts as the Charge relay system.

This sequence belongs to the peptidase S1 family. Snake venom subfamily. Monomer. In terms of tissue distribution, expressed by the venom gland.

The protein resides in the secreted. Its function is as follows. Snake venom serine protease with strong beta-fibrinogenolytic activities, angiotensin I (AGT)-degrading activities and strong kallikrein-like activities in vitro, releasing bradykinin from kininogen (KNG1). Intravenous injection strongly lowers blood pressure in experimental rats, which may be explained by the action on angiotensin I and kininogen. The polypeptide is Beta-fibrinogenase mucrofibrase-1 (Protobothrops mucrosquamatus (Taiwan habu)).